The following is a 269-amino-acid chain: Tryptophan synthase alpha chain (269 aa).

Residues Glu49 and Asp60 each act as proton acceptor in the active site.

It belongs to the TrpA family. Tetramer of two alpha and two beta chains.

It carries out the reaction (1S,2R)-1-C-(indol-3-yl)glycerol 3-phosphate + L-serine = D-glyceraldehyde 3-phosphate + L-tryptophan + H2O. It functions in the pathway amino-acid biosynthesis; L-tryptophan biosynthesis; L-tryptophan from chorismate: step 5/5. Functionally, the alpha subunit is responsible for the aldol cleavage of indoleglycerol phosphate to indole and glyceraldehyde 3-phosphate. The protein is Tryptophan synthase alpha chain of Photobacterium profundum (strain SS9).